The chain runs to 234 residues: Mitochondrial assembly of ribosomal large subunit protein 1 (234 aa).

The interval 63-88 (SEPGLEERAEGTVNEGRPESDAADHT) is disordered.

It belongs to the Iojap/RsfS family. As to quaternary structure, associates with the mitochondrial ribosome large subunit (39S) via interaction with MRPL12 and/or MRPL14. The interaction generates steric hindrance that is expected to prevent premature association of the 28S and 39S ribosomal subunits. Interacts with intermediates of the mitochondrial ribosome large subunit (mt-LSU) (recruits the mitochondrial ribosome and complex I assembly factor AltMIEF1 and NDUFAB1); regulates mitochondrial ribosomes assembly. Interacts with MRPL12 and MRPL14.

It localises to the mitochondrion matrix. In terms of biological role, required for normal mitochondrial ribosome function and mitochondrial translation. May play a role in ribosome biogenesis by preventing premature association of the 28S and 39S ribosomal subunits. Interacts with mitochondrial ribosomal protein uL14m (MRPL14), probably blocking formation of intersubunit bridge B8, preventing association of the 28S and 39S ribosomal subunits. Addition to isolated mitochondrial ribosomal subunits partially inhibits translation, probably by interfering with the association of the 28S and 39S ribosomal subunits and the formation of functional ribosomes. May also participate in the assembly and/or regulation of the stability of the large subunit of the mitochondrial ribosome. May function as a ribosomal silencing factor. The polypeptide is Mitochondrial assembly of ribosomal large subunit protein 1 (MALSU1) (Homo sapiens (Human)).